The primary structure comprises 144 residues: D-aminoacyl-tRNA deacylase (144 aa).

Residues 136 to 137 (GP) carry the Gly-cisPro motif, important for rejection of L-amino acids motif.

It belongs to the DTD family. In terms of assembly, homodimer.

Its subcellular location is the cytoplasm. It carries out the reaction glycyl-tRNA(Ala) + H2O = tRNA(Ala) + glycine + H(+). The catalysed reaction is a D-aminoacyl-tRNA + H2O = a tRNA + a D-alpha-amino acid + H(+). Its function is as follows. An aminoacyl-tRNA editing enzyme that deacylates mischarged D-aminoacyl-tRNAs. Also deacylates mischarged glycyl-tRNA(Ala), protecting cells against glycine mischarging by AlaRS. Acts via tRNA-based rather than protein-based catalysis; rejects L-amino acids rather than detecting D-amino acids in the active site. By recycling D-aminoacyl-tRNA to D-amino acids and free tRNA molecules, this enzyme counteracts the toxicity associated with the formation of D-aminoacyl-tRNA entities in vivo and helps enforce protein L-homochirality. The polypeptide is D-aminoacyl-tRNA deacylase (Aliivibrio salmonicida (strain LFI1238) (Vibrio salmonicida (strain LFI1238))).